Consider the following 833-residue polypeptide: CUB domain-containing protein 1 (833 aa).

A signal peptide spans 1 to 29 (MAHSACGFSVALLGALLLGTARLLRGTEA). The Extracellular segment spans residues 30–666 (SEIALPQRSG…VTLTPRTVDL (637 aa)). N-linked (GlcNAc...) asparagine glycosylation is found at Asn-122, Asn-180, Asn-205, Asn-270, Asn-310, Asn-342, and Asn-386. The region spanning 417 to 540 (CLDHRYCYRQ…QGLIVSYTPY (124 aa)) is the CUB domain. Residues Cys-476 and Cys-499 are joined by a disulfide bond. Residues 667–687 (AVVIGAAGGGALLLFALVLII) traverse the membrane as a helical segment. Over 688 to 833 (CFVKKKKKVD…HTQGPVETEE (146 aa)) the chain is Cytoplasmic. At Tyr-731 the chain carries Phosphotyrosine. Residues 783 to 833 (AKFTAEELAPSSPPESESEPYTFSHPNKGEIGVRETDIPLLHTQGPVETEE) form a disordered region. Residues 809–819 (NKGEIGVRETD) show a composition bias toward basic and acidic residues.

In terms of assembly, interacts with CDH2/N-cadherin, CDH3/P-cadherin, SDC1/syndecan-1, SDC4/syndecan-4 and the serine protease ST14/MT-SP1. Also interacts SRC and PRKCG/protein kinase C gamma. In terms of processing, phosphorylated on tyrosine by kinases of the SRC family such as SRC and YES as well as by the protein kinase C gamma/PRKCG. Dephosphorylated by phosphotyrosine phosphatases. Also phosphorylated by suramin, a heparin analog. Tyrosine phosphorylated in response to dissociation of integrin alpha-6 beta-4 from laminin-5. Post-translationally, N-glycosylated. A soluble form may also be produced by proteolytic cleavage at the cell surface (shedding). Another peptide of 80 kDa (p80) is present in cultured keratinocytes probably due to tryptic cleavage at an unidentified site on the N-terminal side. Converted to p80 by plasmin, a trypsin-like protease.

The protein localises to the cell membrane. Functionally, may be involved in cell adhesion and cell matrix association. May play a role in the regulation of anchorage versus migration or proliferation versus differentiation via its phosphorylation. May be a novel marker for leukemia diagnosis and for immature hematopoietic stem cell subsets. Belongs to the tetraspanin web involved in tumor progression and metastasis. The protein is CUB domain-containing protein 1 (Cdcp1) of Mus musculus (Mouse).